Here is a 127-residue protein sequence, read N- to C-terminus: S1-like domain-containing protein C146.08c (127 aa).

The S1-like domain occupies 10-86; it reads SFDPPARLEK…NKIDGTILYV (77 aa). The interval 107-127 is disordered; the sequence is ESLNQNDSEESSSSEEEYDSD. A compositionally biased stretch (acidic residues) spans 113 to 127; that stretch reads DSEESSSSEEEYDSD. The residue at position 124 (tyrosine 124) is a Phosphotyrosine. Phosphoserine is present on serine 126.

The protein belongs to the EIF1AD family.

It is found in the cytoplasm. The protein resides in the nucleus. The protein is S1-like domain-containing protein C146.08c of Schizosaccharomyces pombe (strain 972 / ATCC 24843) (Fission yeast).